Here is a 72-residue protein sequence, read N- to C-terminus: UPF0426 protein asl4034 (72 aa).

This sequence belongs to the UPF0426 family.

The polypeptide is UPF0426 protein asl4034 (Nostoc sp. (strain PCC 7120 / SAG 25.82 / UTEX 2576)).